The primary structure comprises 475 residues: Beta-amyrin 16-alpha-hydroxylase CYP87D16 (475 aa).

Residues Val3–Trp23 traverse the membrane as a helical segment. Position 423 (Cys423) interacts with heme.

The protein belongs to the cytochrome P450 family. Heme serves as cofactor.

It localises to the membrane. It catalyses the reaction beta-amyrin + reduced [NADPH--hemoprotein reductase] + O2 = 16alpha-hydroxy-beta-amyrin + oxidized [NADPH--hemoprotein reductase] + H2O + H(+). In terms of biological role, involved in the biosynthetic pathway of maesasaponins, which are oleanane-type saponins with diverse biological activities. Catalyzes the C-16alpha oxidation of beta-amyrin to form 16alpha-hydroxy-beta-amyrin. This is Beta-amyrin 16-alpha-hydroxylase CYP87D16 from Maesa lanceolata (False assegai).